An 832-amino-acid polypeptide reads, in one-letter code: Subtilisin-like protease SBT2.4 (832 aa).

Positions 1-27 are cleaved as a signal peptide; it reads METNPRKLRSYSYICLIVCIFVLVVCA. In terms of domain architecture, Inhibitor I9 spans 74–138; it reads EAKKIEEIHD…VEEDKGVKLM (65 aa). The 541-residue stretch at 150 to 690 folds into the Peptidase S8 domain; sequence QQVWQKISNE…AGHVNPARAL (541 aa). Residue Asp-174 is the Charge relay system of the active site. N-linked (GlcNAc...) asparagine glycans are attached at residues Asn-196 and Asn-238. His-252 serves as the catalytic Charge relay system. Positions 425 to 524 constitute a PA domain; sequence TNGSVLQPLT…SAAQIILRYY (100 aa). The N-linked (GlcNAc...) asparagine glycan is linked to Asn-426. The active-site Charge relay system is the Ser-618. 3 N-linked (GlcNAc...) asparagine glycosylation sites follow: Asn-761, Asn-774, and Asn-800.

It belongs to the peptidase S8 family.

It localises to the secreted. In terms of biological role, serine protease required for epidermal surface formation in embryos and juvenile plants. Involved in embryonic cuticle formation downstream of BHLH95/ZOU. This chain is Subtilisin-like protease SBT2.4, found in Arabidopsis thaliana (Mouse-ear cress).